The chain runs to 228 residues: MSTLWADLGPSLLPAFWVTIQLTVYSAIGSMILGTILTAMRVSPVKILRSISTAYINTVRNTPLTLVILFCSFGLYQNLGLTLAGRDSSTFLADNNFRLAVLGFILYTSAFVAESLRSGINTVHFGQAEAARSLGLGFSDIFRSIIFPQAVRAAIIPLGNTLIALTKNTTIASVIGVGEASLLMKSTIENHANMLFVVFAIFAVGFMILTLPMGLGLGKLAEKMAVKK.

4 helical membrane passes run 16 to 36 (FWVT…LGTI), 64 to 84 (LTLV…LTLA), 100 to 120 (AVLG…RSGI), and 195 to 215 (LFVV…PMGL). One can recognise an ABC transmembrane type-1 domain in the interval 16–217 (FWVTIQLTVY…ILTLPMGLGL (202 aa)).

It belongs to the binding-protein-dependent transport system permease family. HisMQ subfamily. As to quaternary structure, the complex is composed of two ATP-binding proteins (GluA), two transmembrane proteins (GluC and GluD) and a solute-binding protein (GluB).

It is found in the cell membrane. In terms of biological role, part of the ABC transporter complex GluABCD involved in glutamate uptake. Probably responsible for the translocation of the substrate across the membrane. This chain is Glutamate transport system permease protein GluC, found in Corynebacterium efficiens (strain DSM 44549 / YS-314 / AJ 12310 / JCM 11189 / NBRC 100395).